Here is a 304-residue protein sequence, read N- to C-terminus: uncharacterized protein (304 aa).

Belongs to the mimivirus L137 family.

This is an uncharacterized protein from Acanthamoeba polyphaga mimivirus (APMV).